The chain runs to 112 residues: Urocortin-2 (112 aa).

An N-terminal signal peptide occupies residues 1–22 (MTRCALLLLMVLMLGRVLVVPV). A propeptide spanning residues 23–70 (TPIPTFQLRPQNSPQTTPRPAASESPSAAPTWPWAAQSHCSPTRHPGS) is cleaved from the precursor. Residues 27 to 66 (TFQLRPQNSPQTTPRPAASESPSAAPTWPWAAQSHCSPTR) form a disordered region. Low complexity predominate over residues 38-58 (TTPRPAASESPSAAPTWPWAA).

Belongs to the sauvagine/corticotropin-releasing factor/urotensin I family. In terms of assembly, binds with high affinity to CRF receptors 2-alpha and 2-beta. Glycosylated.

The protein localises to the secreted. In terms of biological role, suppresses food intake, delays gastric emptying and decreases heat-induced edema. Might represent an endogenous ligand for maintaining homeostasis after stress. This is Urocortin-2 (UCN2) from Homo sapiens (Human).